A 113-amino-acid polypeptide reads, in one-letter code: Small ribosomal subunit protein bS6 (113 aa).

The protein belongs to the bacterial ribosomal protein bS6 family.

Functionally, binds together with bS18 to 16S ribosomal RNA. The chain is Small ribosomal subunit protein bS6 (rpsF) from Synechocystis sp. (strain ATCC 27184 / PCC 6803 / Kazusa).